Consider the following 233-residue polypeptide: MTEADSPARIGIVTFPGSLDDQDTALAVRAAGAEPVSLWHGDSDLAGVDAVILPGGFSYGDYLRAGAIARFSPMVAALVPAARAGLPILGICNGFQVLCEAGLLPGALTRNVGLHFVCRDQRLRVEAPGTAWTRGYQDGEEIVIPVKHGDGRYVAAPDVLAELEAAGRVVVRYVGGNPNGSAADIAGICNESRTIVGLMPHPEHAVDDLTGPGVDGLRMFTSVLSGFLSAFSS.

The Glutamine amidotransferase type-1 domain occupies 9-233 (RIGIVTFPGS…LSGFLSAFSS (225 aa)). Residue Cys-92 is the Nucleophile of the active site. Catalysis depends on residues His-201 and Glu-203.

Part of the FGAM synthase complex composed of 1 PurL, 1 PurQ and 2 PurS subunits.

The protein resides in the cytoplasm. The enzyme catalyses N(2)-formyl-N(1)-(5-phospho-beta-D-ribosyl)glycinamide + L-glutamine + ATP + H2O = 2-formamido-N(1)-(5-O-phospho-beta-D-ribosyl)acetamidine + L-glutamate + ADP + phosphate + H(+). It catalyses the reaction L-glutamine + H2O = L-glutamate + NH4(+). It functions in the pathway purine metabolism; IMP biosynthesis via de novo pathway; 5-amino-1-(5-phospho-D-ribosyl)imidazole from N(2)-formyl-N(1)-(5-phospho-D-ribosyl)glycinamide: step 1/2. Its function is as follows. Part of the phosphoribosylformylglycinamidine synthase complex involved in the purines biosynthetic pathway. Catalyzes the ATP-dependent conversion of formylglycinamide ribonucleotide (FGAR) and glutamine to yield formylglycinamidine ribonucleotide (FGAM) and glutamate. The FGAM synthase complex is composed of three subunits. PurQ produces an ammonia molecule by converting glutamine to glutamate. PurL transfers the ammonia molecule to FGAR to form FGAM in an ATP-dependent manner. PurS interacts with PurQ and PurL and is thought to assist in the transfer of the ammonia molecule from PurQ to PurL. This chain is Phosphoribosylformylglycinamidine synthase subunit PurQ, found in Frankia casuarinae (strain DSM 45818 / CECT 9043 / HFP020203 / CcI3).